Consider the following 261-residue polypeptide: Cytosolic Fe-S cluster assembly factor Nubp2 homolog (261 aa).

14–21 (GKGGVGKS) lines the ATP pocket. [4Fe-4S] cluster-binding residues include Cys-188 and Cys-191.

Belongs to the Mrp/NBP35 ATP-binding proteins family. NUBP2/CFD1 subfamily. In terms of assembly, heterotetramer of 2 Nubp1 and 2 Nubp2 chains. It depends on [4Fe-4S] cluster as a cofactor.

The protein localises to the cytoplasm. Functionally, component of the cytosolic iron-sulfur (Fe/S) protein assembly (CIA) machinery. Required for maturation of extramitochondrial Fe-S proteins. The Nubp1-Nubp2 heterotetramer forms a Fe-S scaffold complex, mediating the de novo assembly of an Fe-S cluster and its transfer to target apoproteins. This chain is Cytosolic Fe-S cluster assembly factor Nubp2 homolog, found in Drosophila ananassae (Fruit fly).